Reading from the N-terminus, the 360-residue chain is Decorin (360 aa).

The signal sequence occupies residues 1-16 (MKATIIFLLVAQVSWA). Positions 17-30 (GPFQQKGLFDFMLE) are excised as a propeptide. The O-linked (Xyl...) (glycosaminoglycan) serine glycan is linked to Ser34. Cystine bridges form between Cys55–Cys61 and Cys59–Cys68. 12 LRR repeats span residues 74–94 (EKVP…NNKI), 95–118 (TEIK…NNKI), 119–142 (SKIS…KNQL), 143–163 (KELP…ENEI), 164–187 (TKVR…TNPL), 188–213 (KSSG…DTNI), 214–234 (TTIP…GNKI), 235–258 (TKVD…FNSI), 259–282 (SAVD…NNKL), 283–305 (VKVP…NNNI), 306–335 (SAIG…SNPV), and 336–360 (QYWE…GNYK). N-linked (GlcNAc...) asparagine glycosylation is present at Asn212. 2 N-linked (GlcNAc...) asparagine glycosylation sites follow: Asn263 and Asn304. A disulfide bond links Cys314 and Cys347.

Belongs to the small leucine-rich proteoglycan (SLRP) family. SLRP class I subfamily. In terms of assembly, binds to type I and type II collagen, fibronectin and TGF-beta. Forms a ternary complex with MFAP2 and ELN. Interacts with DPT. Post-translationally, the attached glycosaminoglycan chain can be either chondroitin 4-sulfate, chondroitin 6-sulfate or dermatan sulfate, depending upon the tissue of origin.

The protein resides in the secreted. It localises to the extracellular space. The protein localises to the extracellular matrix. Its function is as follows. May affect the rate of fibrils formation. This chain is Decorin (DCN), found in Bos taurus (Bovine).